The sequence spans 68 residues: Kasstasin (68 aa).

An N-terminal signal peptide occupies residues 1–20; the sequence is MMKKSMLLLFFLGMVSFSLA. A propeptide spanning residues 21–44 is cleaved from the precursor; the sequence is DDKREDEGEEKRADEGEEKRAAEE. The tract at residues 22 to 41 is disordered; it reads DKREDEGEEKRADEGEEKRA. K67 bears the Lysine amide mark.

It belongs to the frog skin active peptide (FSAP) family. Brevinin subfamily. Expressed by the skin dorsal glands.

The protein localises to the secreted. Functionally, peptide with potent vasoconstrictor properties (EC50=25 pM). Has moderate antimicrobial activity against Gram-positive bacterium S.aureus (MIC=55 uM) and against Gram-negative bacterium E.coli (MIC=110 uM). Not active against fungus C.albicans. Has weak hemolytic activity against horse erythrocytes. In Phlyctimantis maculatus (Red-legged running frog), this protein is Kasstasin.